A 440-amino-acid chain; its full sequence is Ran-specific GTPase-activating protein 30 (440 aa).

The RanBD1 domain occupies 1 to 314 (MDEILAKAGS…LVLKIDRSDD (314 aa)). Threonine 272 carries the phosphothreonine modification. The segment covering 341–371 (IEEDEEEDEEEDEEEGKDGEERKEEEEEENK) has biased composition (acidic residues). The interval 341–375 (IEEDEEEDEEEDEEEGKDGEERKEEEEEENKLEDK) is disordered.

As to quaternary structure, interacts with GSP1.

It is found in the cytoplasm. The protein resides in the nucleus. In terms of biological role, important for the export of protein containing nuclear export signal (NES) out of the nucleus. Stimulates the GTPase activity of GSP1. The sequence is that of Ran-specific GTPase-activating protein 30 (YRB30) from Saccharomyces cerevisiae (strain ATCC 204508 / S288c) (Baker's yeast).